We begin with the raw amino-acid sequence, 413 residues long: BSD domain-containing protein 1-A (413 aa).

The 53-residue stretch at 146 to 198 (WLAYWDPEQRKAEISELLVTSPSIRALFTKMVPAAVSHSEFWQRYFYKVHQLE) folds into the BSD domain. Basic and acidic residues-rich tracts occupy residues 208-219 (KQRADQSVHSEE) and 255-271 (HVEDKSEKTAELNRDHT). 2 disordered regions span residues 208–228 (KQRADQSVHSEEPTWEEEEED) and 255–386 (HVED…EFDM). Positions 274 to 287 (TSPSESSESISPIT) are enriched in low complexity. The span at 297 to 322 (QTPSKEPSPGTLTVTKENTGAGTDET) shows a compositional bias: polar residues. Residues 342–352 (QREDPPSDLRV) are compositionally biased toward basic and acidic residues. The segment covering 356 to 375 (NSDSGKSTPSNNGQKGSSTD) has biased composition (polar residues). Residues 376-386 (ISEDWEKEFDM) are compositionally biased toward acidic residues.

This Xenopus laevis (African clawed frog) protein is BSD domain-containing protein 1-A (bsdc1-a).